Reading from the N-terminus, the 150-residue chain is Large ribosomal subunit protein uL13 (150 aa).

The disordered stretch occupies residues 127–150; it reads KGTEHPHSAQKPQPLQLNPSATAK. Positions 136–150 are enriched in polar residues; that stretch reads QKPQPLQLNPSATAK.

The protein belongs to the universal ribosomal protein uL13 family. Part of the 50S ribosomal subunit.

Its function is as follows. This protein is one of the early assembly proteins of the 50S ribosomal subunit, although it is not seen to bind rRNA by itself. It is important during the early stages of 50S assembly. This Synechococcus sp. (strain CC9902) protein is Large ribosomal subunit protein uL13.